A 387-amino-acid chain; its full sequence is L-aspartate:5-guanidino-3-methyl-2-oxopentanoate transaminase (387 aa).

Lysine 237 is modified (N6-(pyridoxal phosphate)lysine).

It belongs to the class-I pyridoxal-phosphate-dependent aminotransferase family. It depends on pyridoxal 5'-phosphate as a cofactor.

It catalyses the reaction (3R)-5-guanidino-3-methyl-2-oxopentanoate + L-aspartate = (3R)-3-methyl-L-arginine + oxaloacetate. Its pathway is antibiotic biosynthesis. Aminotransferase involved in the formation of the rare amino acid 3-methylarginine (MeArg), which is used as a potent antibiotic against the closely related soybean pathogen P.syringae pv. glycinea. Probably catalyzes transamination from the donor L-aspartate to 5-guanidino-3-methyl-2-oxopentanoic acid, generating 3-methylarginine. In Pseudomonas syringae pv. syringae, this protein is L-aspartate:5-guanidino-3-methyl-2-oxopentanoate transaminase.